Reading from the N-terminus, the 427-residue chain is Glutamate-1-semialdehyde 2,1-aminomutase (427 aa).

Residue Lys265 is modified to N6-(pyridoxal phosphate)lysine.

The protein belongs to the class-III pyridoxal-phosphate-dependent aminotransferase family. HemL subfamily. In terms of assembly, homodimer. The cofactor is pyridoxal 5'-phosphate.

It is found in the cytoplasm. The catalysed reaction is (S)-4-amino-5-oxopentanoate = 5-aminolevulinate. It functions in the pathway porphyrin-containing compound metabolism; protoporphyrin-IX biosynthesis; 5-aminolevulinate from L-glutamyl-tRNA(Glu): step 2/2. This is Glutamate-1-semialdehyde 2,1-aminomutase from Bordetella petrii (strain ATCC BAA-461 / DSM 12804 / CCUG 43448).